Consider the following 233-residue polypeptide: Ras-related protein RabV (233 aa).

15-22 lines the GTP pocket; the sequence is GEKEVGKS. The Effector region signature appears at 37-45; that stretch reads YIPTIGIDF. GTP contacts are provided by residues 63-67 and 122-125; these read DYVSH and TKSD. The tract at residues 143-182 is disordered; the sequence is QNNNNNNNNNNNNNNNNNNNNNNNNNNNNNSNNNNNNNLQ. Positions 144 to 180 are enriched in low complexity; it reads NNNNNNNNNNNNNNNNNNNNNNNNNNNNNSNNNNNNN.

This sequence belongs to the small GTPase superfamily. Rab family.

This is Ras-related protein RabV (rabV) from Dictyostelium discoideum (Social amoeba).